We begin with the raw amino-acid sequence, 1909 residues long: NFX1-type zinc finger-containing protein 1 (1909 aa).

2 stretches are compositionally biased toward basic and acidic residues: residues 1–12 (MEDRRPHLEARP) and 76–107 (RNQE…EGRS). Disordered stretches follow at residues 1 to 133 (MEDR…QPQQ) and 787 to 813 (TQSA…EEEG). Polar residues predominate over residues 113 to 122 (SSDTFQQWHT). Acidic residues predominate over residues 802-813 (EGEEEEEGEEEG). Residues 939–964 (RRRILSYERQYRTWAERMAELRLQED) are a coiled coil. 4 consecutive NF-X1-type zinc fingers follow at residues 1291 to 1313 (CGHV…QCMK), 1375 to 1393 (CGHR…LCSE), 1433 to 1455 (CGHP…RCQQ), and 1463 to 1480 (CSHK…PCQR). Residues 1733-1764 (LAKKRLSFSSQELSDLQSEIQRLTYLVNLLMR) adopt a coiled-coil conformation. The segment at 1818–1889 (ISDEERVQIV…LASEMDGAQH (72 aa)) adopts an RZ-type zinc-finger fold. Residues C1840, H1844, C1860, and C1863 each coordinate Zn(2+).

This sequence belongs to the ZNFX1 family. In terms of assembly, interacts with MAVS.

It is found in the mitochondrion outer membrane. The protein resides in the cytoplasm. It localises to the stress granule. Its function is as follows. RNA-binding protein that initiates the antiviral response and is required to restrict the replication of RNA viruses. Acts as a double-stranded RNA (dsRNA) sensor that recognizes viral RNA and then interacts with MAVS to initiate the type I interferon response. Also required for immunity against some bacteria, such as mycobacteria. This chain is NFX1-type zinc finger-containing protein 1, found in Mus musculus (Mouse).